A 369-amino-acid polypeptide reads, in one-letter code: Small RNA 2'-O-methyltransferase (369 aa).

3 residues coordinate S-adenosyl-L-methionine: Ser-39, Asp-57, and Ser-93. Mg(2+) is bound by residues Glu-111, Glu-114, His-115, and His-161.

Belongs to the methyltransferase superfamily. HEN1 family. Mg(2+) is required as a cofactor.

It localises to the cytoplasm. The enzyme catalyses small RNA 3'-end nucleotide + S-adenosyl-L-methionine = small RNA 3'-end 2'-O-methylnucleotide + S-adenosyl-L-homocysteine + H(+). Methyltransferase that adds a 2'-O-methyl group at the 3'-end of piRNAs, a class of 24 to 30 nucleotide RNAs that are generated by a Dicer-independent mechanism and are primarily derived from transposons and other repeated sequence elements. This probably protects the 3'-end of piRNAs from uridylation activity and subsequent degradation. Stabilization of piRNAs is essential for gametogenesis. The protein is Small RNA 2'-O-methyltransferase (henmt1) of Xenopus tropicalis (Western clawed frog).